The chain runs to 1337 residues: MKVTVCFGRTRVVVPCGDGRMKVFSLIQQAVTRYRKAVAKDPNYWIQVHRLEHGDGGILDLDDILCDVADDKDRLVAVFDEQDPHHGGDGTSASSTGTQSPEIFGSELGTNNVSAFRPYQTTSEIEVTPSVLRANMPLHVRRSSDPALTGLSTSVSDNNFSSEEPSRKNPTRWSTTAGFLKQNTTGSPKTCDRKKDENYRSLPRDPSSWSNQFQRDNARSSLSASHPMVDRWLEKQEQDEEGTEEDSSRVEPVGHADTGLENMPNFSLDDMVKLVQVPNDGGPLGIHVVPFSARGGRTLGLLVKRLEKGGKAEQENLFHENDCIVRINDGDLRNRRFEQAQHMFRQAMRARVIWFHVVPAANKEQYEQLSQREMNNYSPGRFSPDSHCVANRSVANNAPQALPRAPRLSQPPEQLDAHPRLPHSAHASTKPPTAPALAPPNVLSTSVGSVYNTKRVGKRLNIQLKKGTEGLGFSITSRDVTIGGSAPIYVKNILPRGAAIQDGRLKAGDRLIEVNGVDLAGKSQEEVVSLLRSTKMEGTVSLLVFRQEEAFHPREMNAEPSQMQSPKETKAEDEDIVLTPDGTREFLTFEVPLNDSGSAGLGVSVKGNRSKENHADLGIFVKSIINGGAASKDGRLRVNDQLIAVNGESLLGKANQEAMETLRRSMSTEGNKRGMIQLIVARRISRCNELRSPGSPAAPELPIETELDDRERRISHSLYSGIEGLDESPTRNAALSRIMGESGKCQLSPTVNMPHDDTVMIEDDRLPVLPPHLSDQSSSSSHDDVGFIMTEAGTWAKATISDSADCSLSPDVDPVLAFQREGFGRQSMSEKRTKQFSNASQLDFVKTRKSKSMDLGIADETKLNTVDDQRAGSPNRDVGPSLGLKKSSSLESLQTAVAEVTLNGNIPFHRPRPRIIRGRGCNESFRAAIDKSYDKPMVDDDDEGMETLEEDTEESSRSGRESVSTSSDQPSYSLERQMNGDPEKRDKAEKKKDKAGKDKKKDREKEKDKLKAKKGMLKGLGDMFRFGKHRKDDKMEKMGRIKIQDSFTSEEDRVRMKEEQERIQAKTREFRERQARERDYAEIQDFHRTFGCDDELLYGGMSSYDGCLALNARPQSPREGHLMDTLYAQVKKPRSSKPGDSNRSTPSNHDRIQRLRQEFQQAKQDEDVEDRRRTYSFEQSWSSSRPASQSGRHSVSVEVQVQRQRQEERESFQQAQRQYSSLPRQSRKNASSVSQDSWEQNYAPGEGFQSAKENPRYSSYQGSRNGYLGGHGFNARVMLETQELLRQEQRRKEQQLKKQPPADGVRGPFRQDVPPSPSQVARLNRLQTPEKGRPFYS.

The residue at position 25 (serine 25) is a Phosphoserine. 2 disordered regions span residues 81–109 (EQDPHHGGDGTSASSTGTQSPEIFGSELG) and 143–263 (SSDP…LENM). A Phosphothreonine modification is found at threonine 91. The segment covering 91–100 (TSASSTGTQS) has biased composition (low complexity). Composition is skewed to polar residues over residues 150–163 (GLSTSVSDNNFSSE) and 171–188 (TRWSTTAGFLKQNTTGSP). Phosphoserine is present on residues serine 156 and serine 174. Over residues 190 to 203 (TCDRKKDENYRSLP) the composition is skewed to basic and acidic residues. Polar residues predominate over residues 207-224 (SSWSNQFQRDNARSSLSA). Residues 271–359 (MVKLVQVPND…ARVIWFHVVP (89 aa)) form the PDZ 1 domain. Residue serine 383 is modified to Phosphoserine. The disordered stretch occupies residues 397-441 (NAPQALPRAPRLSQPPEQLDAHPRLPHSAHASTKPPTAPALAPPN). PDZ domains follow at residues 461 to 546 (NIQL…LVFR) and 590 to 677 (EVPL…GMIQ). Residue tyrosine 489 is modified to Phosphotyrosine. 6 positions are modified to phosphoserine: serine 692, serine 695, serine 715, serine 728, serine 809, and serine 827. The interaction with PRKCI and PRKCZ stretch occupies residues 712-936 (RRISHSLYSG…AAIDKSYDKP (225 aa)). Lysine 834 bears the N6-acetyllysine mark. Residue serine 837 is modified to Phosphoserine. Lysine 851 is modified (N6-acetyllysine). Residues serine 852 and serine 873 each carry the phosphoserine modification. Disordered regions lie at residues 866–888 (VDDQRAGSPNRDVGPSLGLKKSS), 932–1015 (SYDK…AKKG), 1028–1055 (KHRKDDKMEKMGRIKIQDSFTSEEDRVR), 1110–1271 (LNAR…LGGH), and 1284–1337 (LLRQ…PFYS). Lysine 885 is modified (N6-acetyllysine). Residues 935–1337 (KPMVDDDDEG…TPEKGRPFYS (403 aa)) form an interaction with FRMD4A region. Positions 939–953 (DDDDEGMETLEEDTE) are enriched in acidic residues. Serine 962 is modified (phosphoserine; by AURKA). A phosphoserine mark is found at serine 971 and serine 973. Composition is skewed to basic and acidic residues over residues 981-1009 (DPEKRDKAEKKKDKAGKDKKKDREKEKDK) and 1030-1043 (RKDDKMEKMGRIKI). Serine 1046 carries the post-translational modification Phosphoserine. Positions 1050–1082 (EEDRVRMKEEQERIQAKTREFRERQARERDYAE) form a coiled coil. Residues 1138 to 1147 (PGDSNRSTPS) show a composition bias toward polar residues. A compositionally biased stretch (basic and acidic residues) spans 1148 to 1175 (NHDRIQRLRQEFQQAKQDEDVEDRRRTY). Coiled coils occupy residues 1149–1172 (HDRIQRLRQEFQQAKQDEDVEDRR), 1199–1222 (VQVQRQRQEERESFQQAQRQYSSL), and 1278–1299 (MLETQELLRQEQRRKEQQLKKQ). A compositionally biased stretch (low complexity) spans 1180–1203 (SWSSSRPASQSGRHSVSVEVQVQR). A compositionally biased stretch (polar residues) spans 1219 to 1240 (YSSLPRQSRKNASSVSQDSWEQ). Positions 1284–1296 (LLRQEQRRKEQQL) are enriched in basic and acidic residues. Over residues 1318 to 1327 (SQVARLNRLQ) the composition is skewed to polar residues. Positions 1328-1337 (TPEKGRPFYS) are enriched in basic and acidic residues. Lysine 1331 carries the N6-acetyllysine modification.

The protein belongs to the PAR3 family. In terms of assembly, component of a complex whose core is composed of ARHGAP17, AMOT, PALS1, PATJ and PARD3/PAR3. Interacts (via PDZ 1 domain) with PARD6A, PARD6B and F11R/JAM1. Interacts with AURKA, AURKB and SIRT2. Interacts with PRKCI. Interacts with PRKCZ. Part of a complex with PARD6A or PARD6B, PRKCI or PRKCZ and CDC42 or RAC1. Interacts with LIMK2 and CDH5. Component of the Par polarity complex, composed of at least phosphorylated PRKCZ, PARD3 and TIAM1. Directly interacts with TIAM1 and TIAM2. Interacts with ECT2 and FBF1. Interacts (via PDZ 3 domain) with PTEN (via C-terminus). Interacts (via coiled-coil domain) with FRMD4A. Found in a complex with PARD3, CYTH1 and FRMD4A. Interacts with SAPCD2. Interacts with PRKCA. As to quaternary structure, interacts with PRKCZ. Acetylated. Deacetylated by SIRT2, thereby inhibiting Schwann cell peripheral myelination. Post-translationally, phosphorylation at Ser-827 by PRKCZ and PRKCI occurs at the most apical tip of epithelial cell-cell contacts during the initial phase of tight junction formation and may promote dissociation of the complex with PARD6. EGF-induced Tyr-1127 phosphorylation mediates dissociation from LIMK2. Phosphorylation by AURKA at Ser-962 is required for the normal establishment of neuronal polarity. As to expression, isoform 1 is predominantly expressed in lung, glandular stomach, prostate, ovary and uterus. Isoform 1 is also expressed in brain, with a high expression in the cortex, hippocampus and in the striatum. Isoform 2 is predominantly expressed in intestinal epithelial cells, kidney and prostate.

It is found in the cytoplasm. The protein localises to the endomembrane system. It localises to the cell junction. The protein resides in the tight junction. Its subcellular location is the adherens junction. It is found in the cell cortex. The protein localises to the cytoskeleton. It localises to the cell membrane. Functionally, adapter protein involved in asymmetrical cell division and cell polarization processes. Seems to play a central role in the formation of epithelial tight junctions. Association with PARD6B may prevent the interaction of PARD3 with F11R/JAM1, thereby preventing tight junction assembly. The PARD6-PARD3 complex links GTP-bound Rho small GTPases to atypical protein kinase C proteins. Required for establishment of neuronal polarity and normal axon formation in cultured hippocampal neurons. Involved in Schwann cell peripheral myelination. Targets the phosphatase PTEN to cell junctions. In Rattus norvegicus (Rat), this protein is Partitioning defective 3 homolog (Pard3).